The primary structure comprises 408 residues: Multidrug resistance protein MdtG (408 aa).

The next 11 helical transmembrane spans lie at 16-36 (LIVAWLGCFLTGAAFSLVMPF), 58-78 (IVFSITFLFSAIASPFWGGLA), 92-112 (LGMGIVMVLMGLAQNIWQFLI), 115-135 (ALLGLLGGFVPNANALIATQV), 146-166 (TLSTGGVSGALLGPMAGGLLA), 173-193 (PVFFITASVLILCFFVTLFCI), 224-244 (LFVTTLIIQVATGSIAPILTL), 256-276 (VAFISGMIASVPGVAALLSAP), 290-310 (ILITALIFSVLLLIPMSYVQT), 319-339 (FLLGAADGALLPAVQTLLVYN), and 378-398 (AVFLVTAGVVLFNAVYSWNSL).

The protein belongs to the major facilitator superfamily. DHA1 family. MdtG (TC 2.A.1.2.20) subfamily.

It localises to the cell inner membrane. In terms of biological role, confers resistance to fosfomycin and deoxycholate. The sequence is that of Multidrug resistance protein MdtG from Escherichia coli O6:K15:H31 (strain 536 / UPEC).